Consider the following 248-residue polypeptide: Adenosylcobinamide-GDP ribazoletransferase (248 aa).

The next 6 membrane-spanning stretches (helical) occupy residues 36 to 56 (FFLP…YLGL), 59 to 79 (FLPS…ITGG), 114 to 134 (GTIA…SLVL), 137 to 157 (YSIA…FLCL), 170 to 190 (IFIG…VLVL), and 199 to 219 (ATII…LLCL).

Belongs to the CobS family. Requires Mg(2+) as cofactor.

The protein resides in the cell membrane. It catalyses the reaction alpha-ribazole + adenosylcob(III)inamide-GDP = adenosylcob(III)alamin + GMP + H(+). The catalysed reaction is alpha-ribazole 5'-phosphate + adenosylcob(III)inamide-GDP = adenosylcob(III)alamin 5'-phosphate + GMP + H(+). It functions in the pathway cofactor biosynthesis; adenosylcobalamin biosynthesis; adenosylcobalamin from cob(II)yrinate a,c-diamide: step 7/7. Its function is as follows. Joins adenosylcobinamide-GDP and alpha-ribazole to generate adenosylcobalamin (Ado-cobalamin). Also synthesizes adenosylcobalamin 5'-phosphate from adenosylcobinamide-GDP and alpha-ribazole 5'-phosphate. This is Adenosylcobinamide-GDP ribazoletransferase from Clostridium botulinum (strain Loch Maree / Type A3).